Consider the following 363-residue polypeptide: Lipase (363 aa).

The signal sequence occupies residues 1–24 (MVLKQRANYLGFLIVFFTAFLVEA). A propeptide spanning residues 25-94 (VPIKRQSNST…SYPDSVVQAM (70 aa)) is cleaved from the precursor. Positions 33–69 (STVDSLPPLIPSRTSAPSSSPSTTDPEAPAMSRNGPL) are disordered. A compositionally biased stretch (low complexity) spans 43 to 62 (PSRTSAPSSSPSTTDPEAPA). Disulfide bonds link Cys-123/Cys-362, Cys-134/Cys-137, and Cys-329/Cys-338. The Nucleophile role is filled by Ser-238. Asp-297 (charge relay system) is an active-site residue. A Ca(2+)-binding site is contributed by Asp-350. The active-site Charge relay system is the His-351.

The protein belongs to the AB hydrolase superfamily. Lipase family.

The enzyme catalyses a triacylglycerol + H2O = a diacylglycerol + a fatty acid + H(+). This chain is Lipase, found in Rhizomucor miehei.